The following is a 187-amino-acid chain: Elongation factor P (187 aa).

The protein belongs to the elongation factor P family.

Its subcellular location is the cytoplasm. It participates in protein biosynthesis; polypeptide chain elongation. Involved in peptide bond synthesis. Stimulates efficient translation and peptide-bond synthesis on native or reconstituted 70S ribosomes in vitro. Probably functions indirectly by altering the affinity of the ribosome for aminoacyl-tRNA, thus increasing their reactivity as acceptors for peptidyl transferase. The sequence is that of Elongation factor P from Prochlorococcus marinus (strain NATL2A).